The primary structure comprises 346 residues: uncharacterized protein (346 aa).

This is an uncharacterized protein from Borreliella burgdorferi (strain ATCC 35210 / DSM 4680 / CIP 102532 / B31) (Borrelia burgdorferi).